The following is a 671-amino-acid chain: Chitin biosynthesis protein CHS5 (671 aa).

The Fibronectin type-III domain maps to 78 to 168; it reads KPESPVLKIV…EKVILRTHKM (91 aa). Residues 166 to 262 enclose the BRCT domain; the sequence is HKMTDMSGIT…RIVGVRGFYL (97 aa). Residues 280–671 form a disordered region; the sequence is EELSYSKENE…KKNKKKGKKK (392 aa). At threonine 305 the chain carries Phosphothreonine. Residues 311–321 show a composition bias toward polar residues; sequence ASPNDNESNPS. Residues 322 to 332 are compositionally biased toward basic and acidic residues; sequence EAKEQGEKSGH. Phosphoserine occurs at positions 338, 362, 365, 383, and 384. Polar residues predominate over residues 349–365; it reads ALENETTIETVNPSVRS. Residues 409–419 are compositionally biased toward basic and acidic residues; sequence KSEDTDTHSNE. Over residues 434-443 the composition is skewed to polar residues; that stretch reads NNITTESAGE. Over residues 461 to 486 the composition is skewed to acidic residues; that stretch reads EIETPEVNESIEDANEPAEDSNEPVE. Residues 487–521 show a composition bias toward basic and acidic residues; that stretch reads DSNKPVKDSNKPVEDSNKPVEDSNKPVEDSNKPVE. Acidic residues predominate over residues 522-538; the sequence is DANEPVEDTSEPVEDAG. Polar residues predominate over residues 542–551; sequence QETNEFTTDI. Phosphoserine occurs at positions 573 and 579. Residues 581–591 show a composition bias toward basic and acidic residues; it reads EDVKPEEKGSE. Lysine 584 is covalently cross-linked (Glycyl lysine isopeptide (Lys-Gly) (interchain with G-Cter in ubiquitin)). Serine 590 carries the phosphoserine modification. Polar residues predominate over residues 606–620; sequence GESTTHQKTEASASL. The segment covering 627–638 has biased composition (acidic residues); the sequence is EEQETTEAEVNT. Basic residues predominate over residues 657–671; the sequence is NKKKNKKNKKKGKKK.

Belongs to the CHS5 family. Component of the CHS5/6 complex composed of the 4 CHAPS proteins BCH1, BCH2, BUD7, and CHS6 as well as at least CHS5 and GTP-bound ARF1. The complex interacts with the cargo protein CHS3.

The protein localises to the golgi apparatus. It is found in the trans-Golgi network membrane. Component of the CHS5/6 complex which mediates export of specific cargo proteins, including chitin synthase CHS3. Also involved in targeting FUS1 to sites of polarized growth. In Saccharomyces cerevisiae (strain ATCC 204508 / S288c) (Baker's yeast), this protein is Chitin biosynthesis protein CHS5 (CHS5).